Consider the following 308-residue polypeptide: Thymidylate synthase (308 aa).

Residues arginine 26 and 170–171 (RR) contribute to the dUMP site. The active-site Nucleophile is cysteine 190. Residues 210-213 (RSCD), asparagine 221, and 251-253 (HVY) contribute to the dUMP site. (6R)-5,10-methylene-5,6,7,8-tetrahydrofolate is bound at residue aspartate 213. Alanine 307 is a binding site for (6R)-5,10-methylene-5,6,7,8-tetrahydrofolate.

It belongs to the thymidylate synthase family. Bacterial-type ThyA subfamily. As to quaternary structure, homodimer.

Its subcellular location is the cytoplasm. The catalysed reaction is dUMP + (6R)-5,10-methylene-5,6,7,8-tetrahydrofolate = 7,8-dihydrofolate + dTMP. It functions in the pathway pyrimidine metabolism; dTTP biosynthesis. Its function is as follows. Catalyzes the reductive methylation of 2'-deoxyuridine-5'-monophosphate (dUMP) to 2'-deoxythymidine-5'-monophosphate (dTMP) while utilizing 5,10-methylenetetrahydrofolate (mTHF) as the methyl donor and reductant in the reaction, yielding dihydrofolate (DHF) as a by-product. This enzymatic reaction provides an intracellular de novo source of dTMP, an essential precursor for DNA biosynthesis. This Rhizorhabdus wittichii (strain DSM 6014 / CCUG 31198 / JCM 15750 / NBRC 105917 / EY 4224 / RW1) (Sphingomonas wittichii) protein is Thymidylate synthase.